A 157-amino-acid chain; its full sequence is 2-C-methyl-D-erythritol 2,4-cyclodiphosphate synthase (157 aa).

Residues Asp-9 and His-11 each coordinate a divalent metal cation. Residues 9-11 (DVH) and 35-36 (HS) contribute to the 4-CDP-2-C-methyl-D-erythritol 2-phosphate site. A divalent metal cation is bound at residue His-43. 4-CDP-2-C-methyl-D-erythritol 2-phosphate contacts are provided by residues 57–59 (DIG), 62–66 (FPDTD), 101–107 (AEKPKMA), 133–136 (TTTE), Phe-140, and Arg-143.

This sequence belongs to the IspF family. In terms of assembly, homotrimer. The cofactor is a divalent metal cation.

The catalysed reaction is 4-CDP-2-C-methyl-D-erythritol 2-phosphate = 2-C-methyl-D-erythritol 2,4-cyclic diphosphate + CMP. The protein operates within isoprenoid biosynthesis; isopentenyl diphosphate biosynthesis via DXP pathway; isopentenyl diphosphate from 1-deoxy-D-xylulose 5-phosphate: step 4/6. Functionally, involved in the biosynthesis of isopentenyl diphosphate (IPP) and dimethylallyl diphosphate (DMAPP), two major building blocks of isoprenoid compounds. Catalyzes the conversion of 4-diphosphocytidyl-2-C-methyl-D-erythritol 2-phosphate (CDP-ME2P) to 2-C-methyl-D-erythritol 2,4-cyclodiphosphate (ME-CPP) with a corresponding release of cytidine 5-monophosphate (CMP). The protein is 2-C-methyl-D-erythritol 2,4-cyclodiphosphate synthase of Listeria monocytogenes serovar 1/2a (strain ATCC BAA-679 / EGD-e).